The primary structure comprises 141 residues: Protein C19orf12 homolog (141 aa).

A helical transmembrane segment spans residues 33–53 (LVAAAGAFLGGLVGGPPGIAV).

It belongs to the C19orf12 family.

It is found in the mitochondrion. The protein localises to the mitochondrion membrane. Its subcellular location is the endoplasmic reticulum. The protein resides in the cytoplasm. It localises to the cytosol. This is Protein C19orf12 homolog from Xenopus tropicalis (Western clawed frog).